Reading from the N-terminus, the 48-residue chain is Large ribosomal subunit protein bL33B (48 aa).

It belongs to the bacterial ribosomal protein bL33 family.

The chain is Large ribosomal subunit protein bL33B (rpmG 2) from Mycoplasmoides gallisepticum (strain R(low / passage 15 / clone 2)) (Mycoplasma gallisepticum).